The chain runs to 869 residues: Iron-sulfur cluster assembly SufBD family protein ML0593 (869 aa).

In terms of domain architecture, DOD-type homing endonuclease spans 344–477; that stretch reads LLGLWLGDGH…VRQLAIGCGL (134 aa).

The protein belongs to the iron-sulfur cluster assembly SufBD family. In terms of processing, this protein undergoes a protein self splicing that involves a post-translational excision of the intervening region (intein) followed by peptide ligation.

The chain is Iron-sulfur cluster assembly SufBD family protein ML0593 from Mycobacterium leprae (strain TN).